The chain runs to 505 residues: MGETLGDPPVDPEHGAFADALPMSTSQEITMVDTEMPFWPTNFGISSVDLSVMDDHSHSFDIKPFTTVDFSSISAPHYEDIPFTRADPMVADYKYDLKLQEYQSAIKVEPASPPYYSEKTQLYNRPHEEPSNSLMAIECRVCGDKASGFHYGVHACEGCKGFFRRTIRLKLIYDRCDLNCRIHKKSRNKCQYCRFQKCLAVGMSHNAIRFGRMPQAEKEKLLAEISSDIDQLNPESADLRALAKHLYDSYIKSFPLTKAKARAILTGKTTDKSPFVIYDMNSLMMGEDKIKFKHITPLQEQSKEVAIRIFQGCQFRSVEAVQEITEYAKNIPGFINLDLNDQVTLLKYGVHEIIYTMLASLMNKDGVLISEGQGFMTREFLKSLRKPFGDFMEPKFEFAVKFNALELDDSDLAIFIAVIILSGDRPGLLNVKPIEDIQDNLLQALELQLKLNHPESSQLFAKVLQKMTDLRQIVTEHVQLLHVIKKTETDMSLHPLLQEIYKDLY.

An O-linked (GlcNAc) threonine glycan is attached at Thr-84. Ser-112 is subject to Phosphoserine; by MAPK. Positions Ala-136–Phe-210 form a DNA-binding region, nuclear receptor. 2 consecutive NR C4-type zinc fingers follow at residues Cys-139 to Cys-159 and Cys-176 to Cys-198. An interaction with FAM120B region spans residues His-205–Met-280. An NR LBD domain is found at Asp-238–Asp-503. A Glycyl lysine isopeptide (Lys-Gly) (interchain with G-Cter in ubiquitin) cross-link involves residue Lys-252. The 9aaTAD signature appears at Pro-495 to Asp-503.

Belongs to the nuclear hormone receptor family. NR1 subfamily. In terms of assembly, interacts with FOXO1 (acetylated form). Heterodimer with other nuclear receptors, such as RXRA. The heterodimer with the retinoic acid receptor RXRA is called adipocyte-specific transcription factor ARF6. Interacts with NCOA6 coactivator, leading to a strong increase in transcription of target genes. Interacts with coactivator PPARBP, leading to a mild increase in transcription of target genes. Interacts with NOCA7 in a ligand-inducible manner. Interacts with NCOA1 and NCOA2 LXXLL motifs. Interacts with ASXL1, ASXL2, DNTTIP2, FAM120B, MAP2K1/MEK1, NR0B2, PDPK1, PRDM16, PRMT2 and TGFB1I1. Interacts (when activated by agonist) with PPP5C. Interacts with HELZ2 and THRAP3; the interaction stimulates the transcriptional activity of PPARG. Interacts with PER2, the interaction is ligand dependent and blocks PPARG recruitment to target promoters. Interacts with NOCT. Interacts with ACTN4. Interacts (when in the liganded conformation) with GPS2. Interacts with CRY1 and CRY2 in a ligand-dependent manner. In the absence of hormonal ligand, interacts with TACC1. In macrophages, interacts with PAQR3 and STUB1; the interactions promote PPARG poylubiquitination and STUB1-mediated degradation. Phosphorylated by MAPK. The phosphorylation inhibits PPAR gamma activity. In terms of processing, O-GlcNAcylation at Thr-84 reduces transcriptional activity in adipocytes. Post-translationally, phosphorylated at basal conditions and dephosphorylated when treated with the ligand. May be dephosphorylated by PPP5C. The phosphorylated form may be inactive and dephosphorylation at induces adipogenic activity. Ubiquitinated by E3 ubiquitin-protein ligase complex containing FBXO9; leading to proteasomal degradation. Ubiquitinated at Lys-252 by TRIM55 leading to proteasomal degradation. Ubiquitinated by E3 ubiquitin-protein ligase STUB1/CHIP; leading to proteasomal degradation. In terms of tissue distribution, highest expression in adipose tissue.

It is found in the nucleus. It localises to the cytoplasm. With respect to regulation, PDPK1 activates its transcriptional activity independently of its kinase activity. Functionally, nuclear receptor that binds peroxisome proliferators such as hypolipidemic drugs and fatty acids. Once activated by a ligand, the nuclear receptor binds to DNA specific PPAR response elements (PPRE) and modulates the transcription of its target genes, such as acyl-CoA oxidase. It therefore controls the peroxisomal beta-oxidation pathway of fatty acids. Key regulator of adipocyte differentiation and glucose homeostasis. ARF6 acts as a key regulator of the tissue-specific adipocyte P2 (aP2) enhancer. Acts as a critical regulator of gut homeostasis by suppressing NF-kappa-B-mediated pro-inflammatory responses. Plays a role in the regulation of cardiovascular circadian rhythms by regulating the transcription of BMAL1 in the blood vessels. The sequence is that of Peroxisome proliferator-activated receptor gamma (Pparg) from Rattus norvegicus (Rat).